We begin with the raw amino-acid sequence, 527 residues long: DNA polymerase epsilon subunit 2 (527 aa).

It belongs to the DNA polymerase epsilon subunit B family. As to quaternary structure, component of the DNA polymerase epsilon complex consisting of four subunits: the catalytic subunit POLE and the accessory subunits POLE2, POLE3 and POLE4.

It localises to the nucleus. Functionally, accessory component of the DNA polymerase epsilon complex. Participates in DNA repair and in chromosomal DNA replication. In Homo sapiens (Human), this protein is DNA polymerase epsilon subunit 2.